The chain runs to 154 residues: Large ribosomal subunit protein uL30 (154 aa).

The tract at residues 114–146 (PTLRLHPPRGGHDGVKHPVKEGGQLGKHDTEGI) is disordered. Residues 123 to 144 (GGHDGVKHPVKEGGQLGKHDTE) are compositionally biased toward basic and acidic residues.

This sequence belongs to the universal ribosomal protein uL30 family. As to quaternary structure, part of the 50S ribosomal subunit. Binds 5S rRNA.

This is one of 5 proteins that mediate the attachment of the 5S rRNA onto the large ribosomal subunit, stabilizing the orientation of adjacent RNA domains. The chain is Large ribosomal subunit protein uL30 from Haloarcula marismortui (strain ATCC 43049 / DSM 3752 / JCM 8966 / VKM B-1809) (Halobacterium marismortui).